Here is a 524-residue protein sequence, read N- to C-terminus: Phosphoenolpyruvate carboxykinase (ATP) (524 aa).

Residues Arg52, Tyr188, and Lys194 each contribute to the substrate site. ATP-binding positions include Lys194, His213, and 229–237 (GLSGTGKTT). Positions 194 and 213 each coordinate Mn(2+). Position 250 (Asp250) interacts with Mn(2+). ATP is bound by residues Glu278, Arg314, and Thr439. Position 314 (Arg314) interacts with substrate.

It belongs to the phosphoenolpyruvate carboxykinase (ATP) family. The cofactor is Mn(2+).

The protein localises to the cytoplasm. The catalysed reaction is oxaloacetate + ATP = phosphoenolpyruvate + ADP + CO2. It functions in the pathway carbohydrate biosynthesis; gluconeogenesis. Involved in the gluconeogenesis. Catalyzes the conversion of oxaloacetate (OAA) to phosphoenolpyruvate (PEP) through direct phosphoryl transfer between the nucleoside triphosphate and OAA. The protein is Phosphoenolpyruvate carboxykinase (ATP) of Campylobacter lari (strain RM2100 / D67 / ATCC BAA-1060).